We begin with the raw amino-acid sequence, 67 residues long: Large ribosomal subunit protein uL29 (67 aa).

This sequence belongs to the universal ribosomal protein uL29 family.

The sequence is that of Large ribosomal subunit protein uL29 from Agathobacter rectalis (strain ATCC 33656 / DSM 3377 / JCM 17463 / KCTC 5835 / VPI 0990) (Eubacterium rectale).